Consider the following 495-residue polypeptide: UDP-glycosyltransferase 73C11 (495 aa).

Catalysis depends on His-24, which acts as the Proton acceptor. An an anthocyanidin-binding site is contributed by His-24. The Charge relay role is filled by Asp-129. UDP-alpha-D-glucose contacts are provided by Gln-358, His-373, Trp-376, Asn-377, Ser-378, and Glu-381. Residue Gly-396 participates in an anthocyanidin binding. UDP-alpha-D-glucose is bound by residues Asp-397 and Gln-398.

It belongs to the UDP-glycosyltransferase family.

It carries out the reaction oleanolate + UDP-alpha-D-glucose = oleanolate 3-O-beta-D-glucoside + UDP + H(+). In terms of biological role, catalyzes the transfer of a glucose (Glc) moiety from UDP-Glc to the C-3 position of the oleanane sapogenins oleanolate and hederagenin, and to the C-28 carboxylic group of the lupane sapogenin betulinate. The monoglucosylated hederagenin 3-O-beta-D-glucoside is a feeding deterrent of the yellow-striped flea beetle (Phyllotreta nemorum). This chain is UDP-glycosyltransferase 73C11, found in Barbarea vulgaris (Yellow rocket).